The following is a 405-amino-acid chain: Eukaryotic initiation factor 4A (405 aa).

The short motif at 31 to 59 (ECFEALNLEGDLLRGIFAYGFEKPSAIQQ) is the Q motif element. Positions 62–232 (IKPILDGYDT…TQFMRDPKRI (171 aa)) constitute a Helicase ATP-binding domain. 75–82 (AQSGTGKT) provides a ligand contact to ATP. The DEAD box motif lies at 180–183 (DEAD). The Helicase C-terminal domain occupies 243 to 404 (GIRQFYVGVE…EMPMGITDIL (162 aa)).

Belongs to the DEAD box helicase family. eIF4A subfamily. EIF4F is a multi-subunit complex, the composition of which varies with external and internal environmental conditions. It is composed of at least EIF4A, EIF4E and EIF4G.

It catalyses the reaction ATP + H2O = ADP + phosphate + H(+). ATP-dependent RNA helicase which is a subunit of the eIF4F complex involved in cap recognition and is required for mRNA binding to ribosome. In the current model of translation initiation, eIF4A unwinds RNA secondary structures in the 5'-UTR of mRNAs which is necessary to allow efficient binding of the small ribosomal subunit, and subsequent scanning for the initiator codon. The sequence is that of Eukaryotic initiation factor 4A (EIF4-A) from Cryptosporidium parvum.